The following is a 352-amino-acid chain: Protein RecA (352 aa).

ATP is bound at residue 65–72 (GPESSGKT). The disordered stretch occupies residues 332-352 (EEVEKADVKKDAKKDAAEALK). Residues 333–352 (EVEKADVKKDAKKDAAEALK) show a composition bias toward basic and acidic residues.

Belongs to the RecA family.

It localises to the cytoplasm. In terms of biological role, can catalyze the hydrolysis of ATP in the presence of single-stranded DNA, the ATP-dependent uptake of single-stranded DNA by duplex DNA, and the ATP-dependent hybridization of homologous single-stranded DNAs. It interacts with LexA causing its activation and leading to its autocatalytic cleavage. The polypeptide is Protein RecA (Photobacterium profundum (strain SS9)).